The following is a 72-amino-acid chain: Translation initiation factor IF-1 (72 aa).

One can recognise an S1-like domain in the interval 1 to 72 (MAKEDNIEMQ…SKGRIVFRSR (72 aa)).

This sequence belongs to the IF-1 family. Component of the 30S ribosomal translation pre-initiation complex which assembles on the 30S ribosome in the order IF-2 and IF-3, IF-1 and N-formylmethionyl-tRNA(fMet); mRNA recruitment can occur at any time during PIC assembly.

The protein localises to the cytoplasm. In terms of biological role, one of the essential components for the initiation of protein synthesis. Stabilizes the binding of IF-2 and IF-3 on the 30S subunit to which N-formylmethionyl-tRNA(fMet) subsequently binds. Helps modulate mRNA selection, yielding the 30S pre-initiation complex (PIC). Upon addition of the 50S ribosomal subunit IF-1, IF-2 and IF-3 are released leaving the mature 70S translation initiation complex. This Shewanella pealeana (strain ATCC 700345 / ANG-SQ1) protein is Translation initiation factor IF-1.